We begin with the raw amino-acid sequence, 341 residues long: Gibberellin 2-beta-dioxygenase 5 (341 aa).

Residues Arg-187–Pro-290 form the Fe2OG dioxygenase domain. Tyr-198 provides a ligand contact to 2-oxoglutarate. Residues His-213, Asp-215, and His-271 each contribute to the Fe cation site. 2-oxoglutarate contacts are provided by Arg-281 and Ser-283.

The protein belongs to the iron/ascorbate-dependent oxidoreductase family. GA2OX subfamily. L-ascorbate is required as a cofactor. It depends on Fe(2+) as a cofactor. In terms of tissue distribution, expressed in roots, leaves, culms, leaf sheaths and young panicles.

The protein localises to the cytoplasm. It is found in the nucleus. It carries out the reaction gibberellin A1 + 2-oxoglutarate + O2 = gibberellin A8 + succinate + CO2. It participates in plant hormone biosynthesis; gibberellin biosynthesis. Catalyzes the 2-beta-hydroxylation of several biologically active gibberellins (GAs), leading to the homeostatic regulation of their endogenous level. Catabolism of GAs plays a central role in plant development. In vitro, converts GA12 and GA53 to the corresponding 2-beta-hydroxylated products GA110 and GA97, respectively. The protein is Gibberellin 2-beta-dioxygenase 5 of Oryza sativa subsp. japonica (Rice).